A 457-amino-acid chain; its full sequence is Cell division protein FtsZ (457 aa).

Residues glycine 26–asparagine 30, glycine 115–glycine 117, glutamate 146, lysine 150, and aspartate 193 each bind GTP. Residues lysine 429 to arginine 447 are compositionally biased toward basic and acidic residues. Positions lysine 429–asparagine 457 are disordered. The span at serine 448–asparagine 457 shows a compositional bias: polar residues.

The protein belongs to the FtsZ family. As to quaternary structure, homodimer. Polymerizes to form a dynamic ring structure in a strictly GTP-dependent manner. Interacts directly with several other division proteins.

It is found in the cytoplasm. Functionally, essential cell division protein that forms a contractile ring structure (Z ring) at the future cell division site. The regulation of the ring assembly controls the timing and the location of cell division. One of the functions of the FtsZ ring is to recruit other cell division proteins to the septum to produce a new cell wall between the dividing cells. Binds GTP and shows GTPase activity. The chain is Cell division protein FtsZ from Porphyromonas gingivalis (strain ATCC BAA-308 / W83).